The sequence spans 252 residues: Hydroxyacylglutathione hydrolase (252 aa).

Positions 54, 56, 58, 59, 111, 128, and 166 each coordinate Zn(2+).

It belongs to the metallo-beta-lactamase superfamily. Glyoxalase II family. In terms of assembly, monomer. It depends on Zn(2+) as a cofactor.

It carries out the reaction an S-(2-hydroxyacyl)glutathione + H2O = a 2-hydroxy carboxylate + glutathione + H(+). The protein operates within secondary metabolite metabolism; methylglyoxal degradation; (R)-lactate from methylglyoxal: step 2/2. Thiolesterase that catalyzes the hydrolysis of S-D-lactoyl-glutathione to form glutathione and D-lactic acid. This chain is Hydroxyacylglutathione hydrolase, found in Vibrio vulnificus (strain CMCP6).